Consider the following 322-residue polypeptide: Protein OPG049 (322 aa).

Positions methionine 1–cysteine 20 are cleaved as a signal peptide. Residues asparagine 36, asparagine 41, asparagine 72, asparagine 79, asparagine 108, asparagine 144, asparagine 219, and asparagine 245 are each glycosylated (N-linked (GlcNAc...) asparagine; by host). A helical transmembrane segment spans residues isoleucine 287–isoleucine 307.

This sequence belongs to the orthopoxvirus OPG049 family.

It is found in the host cell membrane. Functionally, plays a role in the spread of virus to neighboring cells ex vivo. This Homo sapiens (Human) protein is Protein OPG049 (OPG049).